Consider the following 454-residue polypeptide: tRNA modification GTPase MnmE (454 aa).

Arginine 23, glutamate 80, and lysine 120 together coordinate (6S)-5-formyl-5,6,7,8-tetrahydrofolate. The TrmE-type G domain occupies 216 to 377 (GMKVVIAGRP…LRNHLKQSMG (162 aa)). Asparagine 226 contributes to the K(+) binding site. GTP-binding positions include 226 to 231 (NAGKSS), 245 to 251 (TDIAGTT), 270 to 273 (DTAG), 335 to 338 (NKAD), and 358 to 360 (SAR). Residue serine 230 coordinates Mg(2+). Residues threonine 245, isoleucine 247, and threonine 250 each coordinate K(+). Mg(2+) is bound at residue threonine 251. Lysine 454 provides a ligand contact to (6S)-5-formyl-5,6,7,8-tetrahydrofolate.

Belongs to the TRAFAC class TrmE-Era-EngA-EngB-Septin-like GTPase superfamily. TrmE GTPase family. Homodimer. Heterotetramer of two MnmE and two MnmG subunits. K(+) is required as a cofactor.

Its subcellular location is the cytoplasm. Functionally, exhibits a very high intrinsic GTPase hydrolysis rate. Involved in the addition of a carboxymethylaminomethyl (cmnm) group at the wobble position (U34) of certain tRNAs, forming tRNA-cmnm(5)s(2)U34. This Escherichia coli (strain SMS-3-5 / SECEC) protein is tRNA modification GTPase MnmE.